Reading from the N-terminus, the 429-residue chain is Aspartate--tRNA(Asp/Asn) ligase (429 aa).

Glu166 is an L-aspartate binding site. Residues Gln188–Lys191 are aspartate. Arg210 serves as a coordination point for L-aspartate. ATP contacts are provided by residues Arg210 to Glu212, Arg218 to Leu220, and Glu352. Mg(2+)-binding residues include Glu352 and Ser355. L-aspartate contacts are provided by Ser355 and Arg359. Gly400–Arg403 is an ATP binding site.

The protein belongs to the class-II aminoacyl-tRNA synthetase family. Type 2 subfamily. As to quaternary structure, homodimer. Mg(2+) is required as a cofactor.

It localises to the cytoplasm. It carries out the reaction tRNA(Asx) + L-aspartate + ATP = L-aspartyl-tRNA(Asx) + AMP + diphosphate. Functionally, aspartyl-tRNA synthetase with relaxed tRNA specificity since it is able to aspartylate not only its cognate tRNA(Asp) but also tRNA(Asn). Reaction proceeds in two steps: L-aspartate is first activated by ATP to form Asp-AMP and then transferred to the acceptor end of tRNA(Asp/Asn). The sequence is that of Aspartate--tRNA(Asp/Asn) ligase from Methanoculleus marisnigri (strain ATCC 35101 / DSM 1498 / JR1).